Reading from the N-terminus, the 464-residue chain is NADH-ubiquinone oxidoreductase chain 4 (464 aa).

The next 13 helical transmembrane spans lie at 1 to 21, 63 to 83, 98 to 118, 119 to 139, 152 to 172, 197 to 217, 227 to 247, 261 to 281, 288 to 308, 314 to 334, 355 to 375, 389 to 409, and 443 to 463; these read MMIT…VIPQ, SISA…LIAS, FIII…ALEL, LLFY…ITRW, FMFY…AIYI, IWWA…GFHL, PVAG…YGLI, LSLA…IICV, ALIA…IFSS, NGAL…FSLA, ILPL…GLPP, LIAW…FGAI, and LHTL…ITWL.

Belongs to the complex I subunit 4 family.

It is found in the mitochondrion membrane. The catalysed reaction is a ubiquinone + NADH + 5 H(+)(in) = a ubiquinol + NAD(+) + 4 H(+)(out). Core subunit of the mitochondrial membrane respiratory chain NADH dehydrogenase (Complex I) that is believed to belong to the minimal assembly required for catalysis. Complex I functions in the transfer of electrons from NADH to the respiratory chain. The immediate electron acceptor for the enzyme is believed to be ubiquinone. This is NADH-ubiquinone oxidoreductase chain 4 (ND4) from Paracentrotus lividus (Common sea urchin).